The sequence spans 260 residues: UPF0246 protein Tola_0968 (260 aa).

It belongs to the UPF0246 family.

This Tolumonas auensis (strain DSM 9187 / NBRC 110442 / TA 4) protein is UPF0246 protein Tola_0968.